Reading from the N-terminus, the 569-residue chain is Urease subunit alpha (569 aa).

In terms of domain architecture, Urease spans Gly-131–Phe-569. Residues His-136, His-138, and Lys-218 each coordinate Ni(2+). Lys-218 is subject to N6-carboxylysine. His-220 is a substrate binding site. Residues His-247 and His-273 each coordinate Ni(2+). His-321 serves as the catalytic Proton donor. Residue Asp-361 coordinates Ni(2+).

Belongs to the metallo-dependent hydrolases superfamily. Urease alpha subunit family. Heterotrimer of UreA (gamma), UreB (beta) and UreC (alpha) subunits. Three heterotrimers associate to form the active enzyme. Ni cation is required as a cofactor. Post-translationally, carboxylation allows a single lysine to coordinate two nickel ions.

Its subcellular location is the cytoplasm. The enzyme catalyses urea + 2 H2O + H(+) = hydrogencarbonate + 2 NH4(+). The protein operates within nitrogen metabolism; urea degradation; CO(2) and NH(3) from urea (urease route): step 1/1. The protein is Urease subunit alpha of Rhizobium rhizogenes (strain K84 / ATCC BAA-868) (Agrobacterium radiobacter).